Here is a 51-residue protein sequence, read N- to C-terminus: MFDDLPPLSHQEQQRAVEEIQKLMAEGMSTAQAIKIIAEKIRAEHKAQSAE.

Belongs to the UPF0181 family.

The protein is UPF0181 protein VVA0806 of Vibrio vulnificus (strain YJ016).